Here is a 580-residue protein sequence, read N- to C-terminus: Cytochrome P450 monooxygenase helB1 (580 aa).

The disordered stretch occupies residues 1-32 (MRTYAIRPVSNRLPGPIEPKKHRRDRDNSTTG). N-linked (GlcNAc...) asparagine glycosylation is present at asparagine 28. Residues 61-81 (FLNTISVLQVLAAIFIGALTY) form a helical membrane-spanning segment. Heme is bound at residue cysteine 497.

The protein belongs to the cytochrome P450 family. The cofactor is heme.

It localises to the membrane. The protein operates within mycotoxin biosynthesis. Functionally, cytochrome P450 monooxygenase; part of the gene cluster that mediates the biosynthesis of helvolic acid, an antibacterial nortriterpenoid. Protostadienol synthase helA cyclizes (3S)-oxidosqualene to (17Z)-protosta-17(20),24-dien-3-beta-ol (protostadienol). The synthesis of protostadienol is followed by several steps of monooxygenation, dehydrogenation, and acyl transfer to yield the final helvolic acid. Following the cyclization to the tetracyclic protostadienol by helA, cytochrome P450 monooxygenases helB1-mediated and helB2-mediated oxidation at C-4 and C-16, acyltransferase helD2-dependent acetylation of 16-OH, oxidation of C-21 by cytochrome P450 monooxygenase helB4, and short chain dehydrogenase helC-dependent oxidative decarboxylation yield the fusidane skeleton. This intermediate is further modified in three additional steps mediated by the cytochrome P450 monooxygenase helB3, the acyltransferase helD1, and the 3-ketosteroid 1-dehydrogenase helE to give helvolic acid. Compared with the late stages in the biosynthesis of helvolic acid, enzymes involved in the early stage modifications act in a relatively strict order. The hydroxylation of C-16 by helB1 and subsequent acetylation by helD2 should occur before the helB3-mediated oxidation of C-21. C-4 demethylation in fusidane-type antibiotics proceeds in an unusual manner though it is also achieved by oxidative decarboxylation. The methyl group at C-4 beta position is oxidized by helB1 and subsequently removed by the short chain dehydrogenase helC. This chain is Cytochrome P450 monooxygenase helB1, found in Aspergillus fumigatus (strain ATCC MYA-4609 / CBS 101355 / FGSC A1100 / Af293) (Neosartorya fumigata).